A 498-amino-acid chain; its full sequence is ATP synthase subunit beta, chloroplastic (498 aa).

172–179 contacts ATP; that stretch reads GGAGVGKT.

The protein belongs to the ATPase alpha/beta chains family. In terms of assembly, F-type ATPases have 2 components, CF(1) - the catalytic core - and CF(0) - the membrane proton channel. CF(1) has five subunits: alpha(3), beta(3), gamma(1), delta(1), epsilon(1). CF(0) has four main subunits: a(1), b(1), b'(1) and c(9-12).

The protein resides in the plastid. The protein localises to the chloroplast thylakoid membrane. It carries out the reaction ATP + H2O + 4 H(+)(in) = ADP + phosphate + 5 H(+)(out). Produces ATP from ADP in the presence of a proton gradient across the membrane. The catalytic sites are hosted primarily by the beta subunits. The protein is ATP synthase subunit beta, chloroplastic of Idiospermum australiense (Ribbonwood tree).